We begin with the raw amino-acid sequence, 94 residues long: Secretoglobin family 1C member 1 (94 aa).

The N-terminal stretch at 1–22 is a signal peptide; the sequence is MKGSSALLVALTVLCICGLTRA.

It belongs to the secretoglobin family. Expressed in the olfactory mucosa.

The protein localises to the secreted. This Rattus norvegicus (Rat) protein is Secretoglobin family 1C member 1 (Scgb1c1).